The sequence spans 573 residues: Eukaryotic translation initiation factor 3 subunit D (573 aa).

A disordered region spans residues 111-162; that stretch reads VFTRGGRGQRGARGTERGGRAQLSRGRGGQYGGGYDRGGRSAAGGRGGRRFG. Positions 136–156 are enriched in gly residues; that stretch reads GRGGQYGGGYDRGGRSAAGGR. The RNA gate stretch occupies residues 301 to 315; sequence ALDMVTVNENAVDAP. The interval 552-573 is disordered; that stretch reads PAGGLDEEEDNGDLGQEEDDEE. Over residues 556–573 the composition is skewed to acidic residues; it reads LDEEEDNGDLGQEEDDEE.

This sequence belongs to the eIF-3 subunit D family. As to quaternary structure, component of the eukaryotic translation initiation factor 3 (eIF-3) complex.

The protein resides in the cytoplasm. In terms of biological role, mRNA cap-binding component of the eukaryotic translation initiation factor 3 (eIF-3) complex, which is involved in protein synthesis of a specialized repertoire of mRNAs and, together with other initiation factors, stimulates binding of mRNA and methionyl-tRNAi to the 40S ribosome. The eIF-3 complex specifically targets and initiates translation of a subset of mRNAs involved in cell proliferation. In the eIF-3 complex, eif3d specifically recognizes and binds the 7-methylguanosine cap of a subset of mRNAs. The protein is Eukaryotic translation initiation factor 3 subunit D of Pyricularia oryzae (strain 70-15 / ATCC MYA-4617 / FGSC 8958) (Rice blast fungus).